A 234-amino-acid polypeptide reads, in one-letter code: Small ribosomal subunit protein uS3 (234 aa).

The 71-residue stretch at 39–109 (IRTLINKHYG…EVRIAIYEVK (71 aa)) folds into the KH type-2 domain.

The protein belongs to the universal ribosomal protein uS3 family. As to quaternary structure, part of the 30S ribosomal subunit. Forms a tight complex with proteins S10 and S14.

Functionally, binds the lower part of the 30S subunit head. Binds mRNA in the 70S ribosome, positioning it for translation. The polypeptide is Small ribosomal subunit protein uS3 (Coprothermobacter proteolyticus (strain ATCC 35245 / DSM 5265 / OCM 4 / BT)).